The following is a 173-amino-acid chain: Shikimate kinase (173 aa).

Glycine 14–threonine 19 lines the ATP pocket. Position 18 (serine 18) interacts with Mg(2+). Residues aspartate 36, arginine 60, and glycine 82 each coordinate substrate. An ATP-binding site is contributed by arginine 120. Arginine 139 provides a ligand contact to substrate. ATP is bound at residue glutamine 156.

This sequence belongs to the shikimate kinase family. As to quaternary structure, monomer. The cofactor is Mg(2+).

The protein resides in the cytoplasm. The catalysed reaction is shikimate + ATP = 3-phosphoshikimate + ADP + H(+). It functions in the pathway metabolic intermediate biosynthesis; chorismate biosynthesis; chorismate from D-erythrose 4-phosphate and phosphoenolpyruvate: step 5/7. Catalyzes the specific phosphorylation of the 3-hydroxyl group of shikimic acid using ATP as a cosubstrate. This Actinobacillus pleuropneumoniae serotype 5b (strain L20) protein is Shikimate kinase.